We begin with the raw amino-acid sequence, 353 residues long: Elongation factor Ts (353 aa).

Positions 80–83 are involved in Mg(2+) ion dislocation from EF-Tu; the sequence is TDFV.

This sequence belongs to the EF-Ts family.

It localises to the cytoplasm. Associates with the EF-Tu.GDP complex and induces the exchange of GDP to GTP. It remains bound to the aminoacyl-tRNA.EF-Tu.GTP complex up to the GTP hydrolysis stage on the ribosome. This is Elongation factor Ts from Sulfurovum sp. (strain NBC37-1).